The following is a 291-amino-acid chain: ATP synthase gamma chain (291 aa).

The protein belongs to the ATPase gamma chain family. As to quaternary structure, F-type ATPases have 2 components, CF(1) - the catalytic core - and CF(0) - the membrane proton channel. CF(1) has five subunits: alpha(3), beta(3), gamma(1), delta(1), epsilon(1). CF(0) has three main subunits: a, b and c.

The protein localises to the cell inner membrane. Its function is as follows. Produces ATP from ADP in the presence of a proton gradient across the membrane. The gamma chain is believed to be important in regulating ATPase activity and the flow of protons through the CF(0) complex. In Aquifex aeolicus (strain VF5), this protein is ATP synthase gamma chain.